Here is a 187-residue protein sequence, read N- to C-terminus: Elongation factor P (187 aa).

It belongs to the elongation factor P family.

The protein localises to the cytoplasm. Its pathway is protein biosynthesis; polypeptide chain elongation. Functionally, involved in peptide bond synthesis. Stimulates efficient translation and peptide-bond synthesis on native or reconstituted 70S ribosomes in vitro. Probably functions indirectly by altering the affinity of the ribosome for aminoacyl-tRNA, thus increasing their reactivity as acceptors for peptidyl transferase. In Treponema pallidum (strain Nichols), this protein is Elongation factor P (efp).